A 243-amino-acid polypeptide reads, in one-letter code: tRNA pseudouridine synthase A (243 aa).

The Nucleophile role is filled by Asp54. Tyr112 contributes to the substrate binding site.

This sequence belongs to the tRNA pseudouridine synthase TruA family. As to quaternary structure, homodimer.

The catalysed reaction is uridine(38/39/40) in tRNA = pseudouridine(38/39/40) in tRNA. Formation of pseudouridine at positions 38, 39 and 40 in the anticodon stem and loop of transfer RNAs. In Onion yellows phytoplasma (strain OY-M), this protein is tRNA pseudouridine synthase A.